A 448-amino-acid polypeptide reads, in one-letter code: Probable intron-encoded endonuclease bI1 (448 aa).

The segment at 1–132 (MRLLKSHPLL…LMMATAFLGY (132 aa)) is cob exon 1 encoded. A run of 3 helical transmembrane segments spans residues 32–52 (FGSL…TLAM), 86–106 (ASAF…YGSY), and 112–132 (LVWA…FLGY). Residues 133–448 (QHSPKWFDIS…QWIVEDFSDK (316 aa)) form a cob intron 1 encoded region. Positions 230–321 (DLSGVYMIIN…LKLLVPNYNI (92 aa)) constitute a GIY-YIG domain.

This sequence to endonucleases of group I introns of fungi and phage. In terms of processing, the mature protein may arise from proteolytic cleavage of an in-frame translation of cob exon 1 plus intron 1, containing the bI1 open reading frame.

It is found in the mitochondrion inner membrane. Functionally, mitochondrial DNA endonuclease involved in intron homing. This chain is Probable intron-encoded endonuclease bI1 (bI1), found in Neurospora crassa (strain ATCC 24698 / 74-OR23-1A / CBS 708.71 / DSM 1257 / FGSC 987).